The primary structure comprises 89 residues: Small ribosomal subunit protein uS15 (89 aa).

The protein belongs to the universal ribosomal protein uS15 family. In terms of assembly, part of the 30S ribosomal subunit. Forms a bridge to the 50S subunit in the 70S ribosome, contacting the 23S rRNA.

One of the primary rRNA binding proteins, it binds directly to 16S rRNA where it helps nucleate assembly of the platform of the 30S subunit by binding and bridging several RNA helices of the 16S rRNA. Its function is as follows. Forms an intersubunit bridge (bridge B4) with the 23S rRNA of the 50S subunit in the ribosome. This is Small ribosomal subunit protein uS15 from Aeromonas hydrophila subsp. hydrophila (strain ATCC 7966 / DSM 30187 / BCRC 13018 / CCUG 14551 / JCM 1027 / KCTC 2358 / NCIMB 9240 / NCTC 8049).